Reading from the N-terminus, the 230-residue chain is 7-cyano-7-deazaguanine synthase (230 aa).

Position 16–26 (16–26 (LSGGLDSMVSG)) interacts with ATP. Zn(2+) is bound by residues Cys-195, Cys-205, Cys-208, and Cys-211.

It belongs to the QueC family. Zn(2+) serves as cofactor.

It carries out the reaction 7-carboxy-7-deazaguanine + NH4(+) + ATP = 7-cyano-7-deazaguanine + ADP + phosphate + H2O + H(+). It participates in purine metabolism; 7-cyano-7-deazaguanine biosynthesis. In terms of biological role, catalyzes the ATP-dependent conversion of 7-carboxy-7-deazaguanine (CDG) to 7-cyano-7-deazaguanine (preQ(0)). The protein is 7-cyano-7-deazaguanine synthase of Rhizorhabdus wittichii (strain DSM 6014 / CCUG 31198 / JCM 15750 / NBRC 105917 / EY 4224 / RW1) (Sphingomonas wittichii).